Consider the following 249-residue polypeptide: Enolase-phosphatase E1 (249 aa).

Residues Asp-15 and Glu-17 each contribute to the Mg(2+) site. Substrate contacts are provided by residues 146 to 147 and Lys-180; that span reads SS. Residue Asp-205 participates in Mg(2+) binding.

It belongs to the HAD-like hydrolase superfamily. MasA/MtnC family. Monomer. Mg(2+) serves as cofactor.

The protein resides in the cytoplasm. Its subcellular location is the nucleus. It carries out the reaction 5-methylsulfanyl-2,3-dioxopentyl phosphate + H2O = 1,2-dihydroxy-5-(methylsulfanyl)pent-1-en-3-one + phosphate. Its pathway is amino-acid biosynthesis; L-methionine biosynthesis via salvage pathway; L-methionine from S-methyl-5-thio-alpha-D-ribose 1-phosphate: step 3/6. It functions in the pathway amino-acid biosynthesis; L-methionine biosynthesis via salvage pathway; L-methionine from S-methyl-5-thio-alpha-D-ribose 1-phosphate: step 4/6. Functionally, bifunctional enzyme that catalyzes the enolization of 2,3-diketo-5-methylthiopentyl-1-phosphate (DK-MTP-1-P) into the intermediate 2-hydroxy-3-keto-5-methylthiopentenyl-1-phosphate (HK-MTPenyl-1-P), which is then dephosphorylated to form the acireductone 1,2-dihydroxy-3-keto-5-methylthiopentene (DHK-MTPene). The chain is Enolase-phosphatase E1 from Caenorhabditis briggsae.